Reading from the N-terminus, the 116-residue chain is Cysteine proteinase inhibitor 1 (116 aa).

An N-terminal signal peptide occupies residues 1–22 (MVPKPLSLLLLLLLALSAAVVG). The Cystatin domain occupies 30-89 (GGWRPIENLNSAEVQDVAQFAVSEHNKQANDELQYQSVVRGYTQVVAGTNYRLVIAAKDG). The Secondary area of contact motif lies at 73–77 (QVVAG). Asn-109 carries an N-linked (GlcNAc...) asparagine glycan.

This sequence belongs to the cystatin family. Phytocystatin subfamily.

The protein localises to the secreted. In terms of biological role, specific inhibitor of papain family cysteine proteinases. The protein is Cysteine proteinase inhibitor 1 of Actinidia chinensis var. chinensis (Chinese soft-hair kiwi).